A 138-amino-acid polypeptide reads, in one-letter code: Large ribosomal subunit protein eL14A (138 aa).

S2 is subject to N-acetylserine.

Belongs to the eukaryotic ribosomal protein eL14 family. Component of the large ribosomal subunit (LSU). Mature yeast ribosomes consist of a small (40S) and a large (60S) subunit. The 40S small subunit contains 1 molecule of ribosomal RNA (18S rRNA) and 33 different proteins (encoded by 57 genes). The large 60S subunit contains 3 rRNA molecules (25S, 5.8S and 5S rRNA) and 46 different proteins (encoded by 81 genes). In terms of processing, N-terminally acetylated by acetyltransferase NatA.

Its subcellular location is the cytoplasm. In terms of biological role, component of the ribosome, a large ribonucleoprotein complex responsible for the synthesis of proteins in the cell. The small ribosomal subunit (SSU) binds messenger RNAs (mRNAs) and translates the encoded message by selecting cognate aminoacyl-transfer RNA (tRNA) molecules. The large subunit (LSU) contains the ribosomal catalytic site termed the peptidyl transferase center (PTC), which catalyzes the formation of peptide bonds, thereby polymerizing the amino acids delivered by tRNAs into a polypeptide chain. The nascent polypeptides leave the ribosome through a tunnel in the LSU and interact with protein factors that function in enzymatic processing, targeting, and the membrane insertion of nascent chains at the exit of the ribosomal tunnel. This Saccharomyces cerevisiae (strain ATCC 204508 / S288c) (Baker's yeast) protein is Large ribosomal subunit protein eL14A.